A 583-amino-acid chain; its full sequence is Moesin/ezrin/radixin homolog 1 (583 aa).

In terms of domain architecture, FERM spans methionine 11–arginine 301. Disordered stretches follow at residues threonine 466–alanine 518 and arginine 539–glycine 558. The segment covering glutamate 476–leucine 485 has biased composition (acidic residues). The segment covering aspartate 496–alanine 518 has biased composition (basic and acidic residues). Threonine 564 carries the post-translational modification Phosphothreonine.

Interacts with cytoskeletal actin.

It is found in the cell junction. Its subcellular location is the adherens junction. The protein localises to the cell projection. The protein resides in the microvillus. It localises to the rhabdomere. It is found in the cell membrane. Its subcellular location is the cytoplasm. The protein localises to the cytoskeleton. Functionally, involved in connections of major cytoskeletal structures to the plasma membrane. This Aedes aegypti (Yellowfever mosquito) protein is Moesin/ezrin/radixin homolog 1.